Consider the following 835-residue polypeptide: Ribonucleoside-diphosphate reductase large subunit (835 aa).

Residues S222, 237–238 (SC), G266, 447–451 (NLCCE), and 660–664 (PSASS) each bind substrate. C238 and C464 are disulfide-bonded. N447 acts as the Proton acceptor in catalysis. Catalysis depends on C449, which acts as the Cysteine radical intermediate. The Proton acceptor role is filled by E451.

Belongs to the ribonucleoside diphosphate reductase large chain family. In terms of assembly, heterotetramer composed of a homodimer of the large subunit (R1) and a homodimer of the small subunit (R2). Larger multisubunit protein complex are also active, composed of (R1)n(R2)n.

The enzyme catalyses a 2'-deoxyribonucleoside 5'-diphosphate + [thioredoxin]-disulfide + H2O = a ribonucleoside 5'-diphosphate + [thioredoxin]-dithiol. In terms of biological role, ribonucleoside-diphosphate reductase holoenzyme provides the precursors necessary for viral DNA synthesis. Allows virus growth in non-dividing cells. Catalyzes the biosynthesis of deoxyribonucleotides from the corresponding ribonucleotides. The polypeptide is Ribonucleoside-diphosphate reductase large subunit (Magallana gigas (Pacific oyster)).